The chain runs to 172 residues: uncharacterized protein (172 aa).

Residues 3-171 enclose the PfpI endopeptidase domain; the sequence is KKVAIILADE…FNREIVKKLE (169 aa).

This sequence belongs to the peptidase C56 family.

This is an uncharacterized protein from Staphylococcus epidermidis (strain ATCC 35984 / DSM 28319 / BCRC 17069 / CCUG 31568 / BM 3577 / RP62A).